The sequence spans 407 residues: CCCH-type zinc finger protein oma-1 (407 aa).

The interval 1-39 (MNVNGENNEKIDEHHLESSLAGVPTLPVSPLDHAKDLSQ) is disordered. Positions 7–17 (NNEKIDEHHLE) are enriched in basic and acidic residues. The tract at residues 46-80 (IGDLVTQTANLIAIKKQLLEDIAFNQHIQSMQVRA) is required for taf-4 binding. 2 consecutive C3H1-type zinc fingers follow at residues 112-140 (SYKT…HGEE) and 154-182 (KYKT…HPDH). At Thr-239 the chain carries Phosphothreonine; by mbk-2 and GSK3. At Ser-302 the chain carries Phosphoserine; by mbk-2. Thr-339 carries the phosphothreonine; by GSK3 modification.

In terms of assembly, interacts with taf-4 (via C-terminus). Interacts with ifet-1. Component of a ribonucleoprotein particle complex that interacts with cgh-1 and car-1 in an RNA-dependent manner. Association with many proteins is dependent on the presence of RNA. In terms of processing, phosphorylation by mbk-2 and by gsk-3 are required for its rapid degradation following meiosis II. Exclusively expressed in the hermaphrodite gonad. Expressed prior to oocyte division. Widely distributed throughout gonadal oocytes from the mitotic stage to the developing diakinesis stage. Expressed in sperm.

It is found in the cytoplasm. The protein resides in the cytoplasmic granule. The protein localises to the nucleus. Zinc-finger RNA-binding protein that binds to 5'-UA[AU]-3' motifs in the 3'-UTR of maternal mRNAs to suppress translation in oocytes and embryos. Acts as a ribonucleoprotein particle component that may exert part of its function within cytoplasmic foci of unfertilized oocytes. Acts redundantly with oma-2 to control the temporal expression and distribution of maternal proteins and thereby promote meiotic progression, oocyte maturation, fertilization and embryonic development. Recruits the translational repressor ifet-1 to the 3'-UTR of mei-1 and zif-1 to negatively regulate their translation. By suppressing the translation of the E3 ligase zif-1, may in turn play a role in the stabilization of zif-1 targets such as the maternal transcriptional repressor protein pie-1. Following fertilization, sequesters the transcription initiation factor, taf-4, in the cytoplasm, which prevents its nuclear localization and thus allows for transcriptional suppression in early embryos, but not in oocytes. Also, together with oma-2, is involved in P-granule distribution during embryonic development. This chain is CCCH-type zinc finger protein oma-1, found in Caenorhabditis elegans.